A 104-amino-acid chain; its full sequence is Protein SMALL AUXIN UP-REGULATED RNA 9 (104 aa).

The protein belongs to the ARG7 family. Interacts with and inhibits PP2C-D subfamily of type 2C phosphatases such as PP2C67/PP2C-D1. As to expression, expressed in etiolated hypocotyls, petioles, leaves and flowers.

The protein resides in the cell membrane. Functionally, provide a mechanistic link between auxin and plasma membrane H(+)-ATPases (PM H(+)-ATPases, e.g. AHA1 and AHA2), and triggers PM H(+)-ATPases activity by promoting phosphorylation of their C-terminal autoinhibitory domain as a result of PP2C-D subfamily of type 2C phosphatases inhibition, thus leading to the acidification of the apoplast and the facilitation of solutes and water uptake to drive cell expansion. Triggers plant growth probably by promoting cell elongation. Regulates branch angles and bending. Probably involved in light intensity mediated root development. In Arabidopsis thaliana (Mouse-ear cress), this protein is Protein SMALL AUXIN UP-REGULATED RNA 9.